The chain runs to 107 residues: HTH-type transcriptional regulator Rv2034 (107 aa).

Residues 1 to 93 (MSTYRSPDRA…DLDRFWTRAL (93 aa)) enclose the HTH arsR-type domain. Positions 33–56 (VGELARDLPVSRPAVSQHLKVLKT) form a DNA-binding region, H-T-H motif.

Homodimer.

DNA-binding ability is not susceptible to zinc, nickel, cobalt, cadmium, lead, copper and manganese ions. Its function is as follows. Involved in the regulation of lipid metabolism and hypoxic response. Positively regulates transcription of various genes, such as phoP, groEL2 and dosR. Negatively regulates its own transcription. Acts by binding to a specific palindromic sequence motif in promoter regions. The chain is HTH-type transcriptional regulator Rv2034 from Mycobacterium tuberculosis (strain ATCC 25618 / H37Rv).